The primary structure comprises 340 residues: Arginine N-succinyltransferase subunit beta (340 aa).

It belongs to the succinylarginine dihydrolase family. In terms of assembly, heterotetramer of two alpha and two beta subunits.

It catalyses the reaction succinyl-CoA + L-arginine = N(2)-succinyl-L-arginine + CoA + H(+). It functions in the pathway amino-acid degradation; L-arginine degradation via AST pathway; L-glutamate and succinate from L-arginine: step 1/5. The protein is Arginine N-succinyltransferase subunit beta (aruG) of Pseudomonas aeruginosa (strain ATCC 15692 / DSM 22644 / CIP 104116 / JCM 14847 / LMG 12228 / 1C / PRS 101 / PAO1).